Consider the following 301-residue polypeptide: tRNA dimethylallyltransferase (301 aa).

12–19 (GPTAVGKT) contributes to the ATP binding site. Substrate is bound at residue 14 to 19 (TAVGKT). Positions 37–40 (DSQQ) are interaction with substrate tRNA.

It belongs to the IPP transferase family. Monomer. Requires Mg(2+) as cofactor.

The catalysed reaction is adenosine(37) in tRNA + dimethylallyl diphosphate = N(6)-dimethylallyladenosine(37) in tRNA + diphosphate. Catalyzes the transfer of a dimethylallyl group onto the adenine at position 37 in tRNAs that read codons beginning with uridine, leading to the formation of N6-(dimethylallyl)adenosine (i(6)A). This Streptococcus uberis (strain ATCC BAA-854 / 0140J) protein is tRNA dimethylallyltransferase.